A 188-amino-acid polypeptide reads, in one-letter code: ATP-dependent protease subunit HslV (188 aa).

Residue T14 is part of the active site. The Na(+) site is built by A173, C176, and T179.

Belongs to the peptidase T1B family. HslV subfamily. A double ring-shaped homohexamer of HslV is capped on each side by a ring-shaped HslU homohexamer. The assembly of the HslU/HslV complex is dependent on binding of ATP.

The protein resides in the cytoplasm. The catalysed reaction is ATP-dependent cleavage of peptide bonds with broad specificity.. With respect to regulation, allosterically activated by HslU binding. Protease subunit of a proteasome-like degradation complex believed to be a general protein degrading machinery. The protein is ATP-dependent protease subunit HslV of Caulobacter vibrioides (strain ATCC 19089 / CIP 103742 / CB 15) (Caulobacter crescentus).